Consider the following 245-residue polypeptide: Protein FAM133B (245 aa).

2 disordered regions span residues 19 to 38 (SRGP…NRPR) and 69 to 245 (WKKE…SDSP). Positions 69–80 (WKKELEKHREKL) are enriched in basic and acidic residues. Ser-82 bears the Phosphoserine mark. Residues 89 to 102 (KKRQKKKKEKKKSG) show a composition bias toward basic residues. Positions 103–119 (RYSSSSSSSSDSSSSSS) are enriched in low complexity. Residues 128-140 (QTKRRKKKKSHCH) are compositionally biased toward basic residues. The span at 165–176 (KDITEREKDTKG) shows a compositional bias: basic and acidic residues. A phosphoserine mark is found at Ser-190, Ser-191, Ser-193, and Ser-195. A compositionally biased stretch (basic and acidic residues) spans 209-219 (SGEERERTTDK). The segment covering 220 to 237 (AKKRRKHKKHSKKKKKKA) has biased composition (basic residues).

The protein belongs to the FAM133 family.

The polypeptide is Protein FAM133B (Fam133b) (Rattus norvegicus (Rat)).